The following is a 621-amino-acid chain: Stimulated by retinoic acid gene 6 protein-like (621 aa).

At 1-21 the chain is on the extracellular side; the sequence is MLAASTRTRQINITCDNPVDR. N-linked (GlcNAc...) asparagine glycosylation occurs at N12. A helical membrane pass occupies residues 22–42; sequence EVFLHYSLIPSLCIILVLSFL. Over 43 to 53 the chain is Cytoplasmic; that stretch reads QRREHRRQRDD. Residues 54–74 traverse the membrane as a helical segment; the sequence is TSYLLGNHFGIIVPLDFVGTF. The Extracellular segment spans residues 75-110; it reads SNRWSYGAAFGATANKVMFLFSEGYQPLTVPQWAQA. Residues 111 to 131 form a helical membrane-spanning segment; sequence FVLFIGGMEVGLSYFPFFACL. Residues 132 to 137 lie on the Cytoplasmic side of the membrane; sequence SSEFQL. A helical transmembrane segment spans residues 138-158; sequence VSSILGFSYSLTWFVVTVLQI. The Extracellular portion of the chain corresponds to 159–173; it reads SQCPHGQFLGRFETL. The helical transmembrane segment at 174–194 threads the bilayer; it reads VFYWPSLLCLGFLLGRFLHMF. Residues 195-258 lie on the Cytoplasmic side of the membrane; sequence LKALPVHLGL…CFQFPSRMVG (64 aa). Residues 259–279 form a helical membrane-spanning segment; sequence TLLLAFICLYLFIVIEFCVFL. At 280–321 the chain is on the extracellular side; sequence HVRDKLDMFEDKLESYLTHMNETGTLTPIILQVKELISVTKG. A helical membrane pass occupies residues 322–342; the sequence is VWVVTILPAALTCVTYLFHIL. Residues 343 to 383 lie on the Cytoplasmic side of the membrane; the sequence is ACYRKHMKRLWAGDKHFLPQKFHSPSSAASVVAIARYSGWQ. Residues 384–404 form a helical membrane-spanning segment; that stretch reads IAYILWGYLIIHVVQSLCGVM. Topologically, residues 405–424 are extracellular; sequence LMYGLVLPIIHHRGLEMLQG. The chain crosses the membrane as a helical span at residues 425–445; the sequence is FGLGVLTLSIVVGLIILQVWI. The Cytoplasmic segment spans residues 446–476; it reads AGTFFLQPKLGTSDKQKPLALNNRRAFHNFN. Residues 477 to 497 form a helical membrane-spanning segment; it reads YFLFFYNVLLGLGACLSRLLI. The Extracellular portion of the chain corresponds to 498-621; it reads SCLLGTWLIA…TQILLTCSDC (124 aa). Residue T612 is modified to Phosphothreonine.

Post-translationally, glycosylated. In terms of tissue distribution, highly expressed in liver and small intestine. Also expressed in spleen, kidney, colon, stomach, placenta, adipose tissue and isolated adipocytes.

It localises to the cell membrane. Its function is as follows. Acts as a high-affinity cell-surface receptor for retinol-binding protein RBP4 and mediates RBP4-dependent retinol uptake in the liver. This Mus musculus (Mouse) protein is Stimulated by retinoic acid gene 6 protein-like.